The primary structure comprises 1364 residues: DNA-directed RNA polymerase subunit beta' (1364 aa).

A disordered region spans residues 1–42 (MTSSSSKSNKSRKSSKAAKDTTPVHESASRPLSKTPPPFRNH). Zn(2+) contacts are provided by Cys-250, Cys-317, Cys-324, and Cys-327.

The protein belongs to the RNA polymerase beta' chain family. RpoC2 subfamily. As to quaternary structure, in cyanobacteria the RNAP catalytic core is composed of 2 alpha, 1 beta, 1 beta', 1 gamma and 1 omega subunit. When a sigma factor is associated with the core the holoenzyme is formed, which can initiate transcription. Requires Zn(2+) as cofactor.

It carries out the reaction RNA(n) + a ribonucleoside 5'-triphosphate = RNA(n+1) + diphosphate. DNA-dependent RNA polymerase catalyzes the transcription of DNA into RNA using the four ribonucleoside triphosphates as substrates. This is DNA-directed RNA polymerase subunit beta' from Parasynechococcus marenigrum (strain WH8102).